Here is a 471-residue protein sequence, read N- to C-terminus: ATP synthase subunit beta (471 aa).

152-159 lines the ATP pocket; that stretch reads GGAGVGKT.

This sequence belongs to the ATPase alpha/beta chains family. As to quaternary structure, F-type ATPases have 2 components, CF(1) - the catalytic core - and CF(0) - the membrane proton channel. CF(1) has five subunits: alpha(3), beta(3), gamma(1), delta(1), epsilon(1). CF(0) has three main subunits: a(1), b(2) and c(9-12). The alpha and beta chains form an alternating ring which encloses part of the gamma chain. CF(1) is attached to CF(0) by a central stalk formed by the gamma and epsilon chains, while a peripheral stalk is formed by the delta and b chains.

It localises to the cell membrane. It catalyses the reaction ATP + H2O + 4 H(+)(in) = ADP + phosphate + 5 H(+)(out). Its function is as follows. Produces ATP from ADP in the presence of a proton gradient across the membrane. The catalytic sites are hosted primarily by the beta subunits. The protein is ATP synthase subunit beta of Herpetosiphon aurantiacus (Herpetosiphon giganteus).